The sequence spans 361 residues: MSLPHLAPEMALLERPLIDVRAPVEFARGALPGAVNLPLMDDAERHAVGIRYKEAGQGAAIALGERLVDGDLKARRVAAWRAFAERHPDAVIYCFRGGLRSRIAQQWLQEAGITLPRIQGGWKAMRQCVNAEIEAAAARPVLVVAGLTGCAKTELVQSLDVGIDLEGHARHKGSAFGRHPLQGPSQIDFEHALGAALSHATHGCVVEDESRMIGQLDIPLSFWQTMETAPRIRVEMPLDWRLEQIRKDYIDTLWRTYRDHYGEWLGWSLMRKQLSSALKRVRKRLGSARFQRLQRLQALAFREHQRGNTQAHEAWLAPLMLEYYDPMYRYQLEQSPYEALHVGDWESCLAFARDWSAALPR.

The 124-residue stretch at 11 to 134 (ALLERPLIDV…MRQCVNAEIE (124 aa)) folds into the Rhodanese domain. Cys94 functions as the S-selanylcysteine intermediate in the catalytic mechanism.

Belongs to the SelU family. Monomer.

It carries out the reaction 5-methylaminomethyl-2-thiouridine(34) in tRNA + selenophosphate + (2E)-geranyl diphosphate + H2O + H(+) = 5-methylaminomethyl-2-selenouridine(34) in tRNA + (2E)-thiogeraniol + phosphate + diphosphate. The catalysed reaction is 5-methylaminomethyl-2-thiouridine(34) in tRNA + (2E)-geranyl diphosphate = 5-methylaminomethyl-S-(2E)-geranyl-thiouridine(34) in tRNA + diphosphate. It catalyses the reaction 5-methylaminomethyl-S-(2E)-geranyl-thiouridine(34) in tRNA + selenophosphate + H(+) = 5-methylaminomethyl-2-(Se-phospho)selenouridine(34) in tRNA + (2E)-thiogeraniol. The enzyme catalyses 5-methylaminomethyl-2-(Se-phospho)selenouridine(34) in tRNA + H2O = 5-methylaminomethyl-2-selenouridine(34) in tRNA + phosphate. Involved in the post-transcriptional modification of the uridine at the wobble position (U34) of tRNA(Lys), tRNA(Glu) and tRNA(Gln). Catalyzes the conversion of 2-thiouridine (S2U-RNA) to 2-selenouridine (Se2U-RNA). Acts in a two-step process involving geranylation of 2-thiouridine (S2U) to S-geranyl-2-thiouridine (geS2U) and subsequent selenation of the latter derivative to 2-selenouridine (Se2U) in the tRNA chain. The polypeptide is tRNA 2-selenouridine synthase (Chromohalobacter salexigens (strain ATCC BAA-138 / DSM 3043 / CIP 106854 / NCIMB 13768 / 1H11)).